Reading from the N-terminus, the 42-residue chain is Delta-hexatoxin-Hv1b (42 aa).

4 cysteine pairs are disulfide-bonded: Cys1-Cys15, Cys8-Cys20, Cys14-Cys31, and Cys16-Cys42.

This sequence belongs to the neurotoxin 06 (delta-actx) family. Expressed by the venom gland.

It localises to the secreted. Lethal neurotoxin. Slows the inactivation of tetrodotoxin-sensitive voltage-gated sodium channels (Nav) by binding to site 3 of the channel, resulting in repetitive firing in autonomic and motor nerve fibers. In Hadronyche versuta (Blue mountains funnel-web spider), this protein is Delta-hexatoxin-Hv1b.